The following is a 336-amino-acid chain: Solute-binding protein Csal_2479 (336 aa).

A signal peptide spans 1–33 (MQTNKRLKMASCVKAAAMLGMLLSVSISTTAQA). Beta-D-glucuronate contacts are provided by residues His-42, Gln-80, Arg-156, Arg-177, Tyr-200, 217–218 (NN), and Glu-244.

The protein belongs to the bacterial solute-binding protein 7 family. In terms of assembly, the complex is comprised of an extracytoplasmic solute-binding protein and a heteromeric permease formed by two transmembrane proteins.

The protein localises to the periplasm. Solute-binding protein that binds D-glucuronate (in vitro). Probably part of a tripartite ATP-independent periplasmic (TRAP) transport system that mediates solute transport into the cytoplasm. The protein is Solute-binding protein Csal_2479 of Chromohalobacter salexigens (strain ATCC BAA-138 / DSM 3043 / CIP 106854 / NCIMB 13768 / 1H11).